The sequence spans 130 residues: Small ribosomal subunit protein uS9 (130 aa).

The protein belongs to the universal ribosomal protein uS9 family.

This chain is Small ribosomal subunit protein uS9, found in Clostridium beijerinckii (strain ATCC 51743 / NCIMB 8052) (Clostridium acetobutylicum).